Here is a 387-residue protein sequence, read N- to C-terminus: Alpha-sarcoglycan (387 aa).

The signal sequence occupies residues 1–24; it reads MAAAALLWLPLLVGCLAGPGGTEA. Topologically, residues 25 to 290 are extracellular; it reads QQTTLYPLVG…ATARDFLADA (266 aa). N-linked (GlcNAc...) asparagine glycans are attached at residues Asn174 and Asn246. Residues 291–311 form a helical membrane-spanning segment; the sequence is LVTLLVPLLVALLLALLLAYI. Over 312–387 the chain is Cytoplasmic; it reads MCCRREGRLK…AQVPLILDQH (76 aa). Ser377 bears the Phosphoserine mark.

This sequence belongs to the sarcoglycan alpha/epsilon family. In terms of assembly, cross-link to form 2 major subcomplexes: one consisting of SGCB, SGCD and SGCG and the other consisting of SGCB and SGCD. The association between SGCB and SGCG is particularly strong while SGCA is loosely associated with the other sarcoglycans. Interacts with the syntrophin SNTA1.

The protein resides in the cell membrane. It is found in the sarcolemma. The protein localises to the cytoplasm. It localises to the cytoskeleton. Component of the sarcoglycan complex, a subcomplex of the dystrophin-glycoprotein complex which forms a link between the F-actin cytoskeleton and the extracellular matrix. The chain is Alpha-sarcoglycan (SGCA) from Oryctolagus cuniculus (Rabbit).